The following is a 233-amino-acid chain: tRNA (guanine-N(7)-)-methyltransferase (233 aa).

S-adenosyl-L-methionine is bound by residues E64, E89, D116, and D138. D138 is an active-site residue. Residues K142, D174, and 212 to 215 each bind substrate; that span reads TRYE.

This sequence belongs to the class I-like SAM-binding methyltransferase superfamily. TrmB family.

It catalyses the reaction guanosine(46) in tRNA + S-adenosyl-L-methionine = N(7)-methylguanosine(46) in tRNA + S-adenosyl-L-homocysteine. It participates in tRNA modification; N(7)-methylguanine-tRNA biosynthesis. In terms of biological role, catalyzes the formation of N(7)-methylguanine at position 46 (m7G46) in tRNA. This Rhizobium johnstonii (strain DSM 114642 / LMG 32736 / 3841) (Rhizobium leguminosarum bv. viciae) protein is tRNA (guanine-N(7)-)-methyltransferase.